We begin with the raw amino-acid sequence, 158 residues long: NAD(P)H-quinone oxidoreductase subunit J, chloroplastic (158 aa).

It belongs to the complex I 30 kDa subunit family. In terms of assembly, NDH is composed of at least 16 different subunits, 5 of which are encoded in the nucleus.

It localises to the plastid. It is found in the chloroplast thylakoid membrane. The enzyme catalyses a plastoquinone + NADH + (n+1) H(+)(in) = a plastoquinol + NAD(+) + n H(+)(out). The catalysed reaction is a plastoquinone + NADPH + (n+1) H(+)(in) = a plastoquinol + NADP(+) + n H(+)(out). Its function is as follows. NDH shuttles electrons from NAD(P)H:plastoquinone, via FMN and iron-sulfur (Fe-S) centers, to quinones in the photosynthetic chain and possibly in a chloroplast respiratory chain. The immediate electron acceptor for the enzyme in this species is believed to be plastoquinone. Couples the redox reaction to proton translocation, and thus conserves the redox energy in a proton gradient. This is NAD(P)H-quinone oxidoreductase subunit J, chloroplastic from Crucihimalaya wallichii (Rock-cress).